The sequence spans 553 residues: Phosphoglucomutase (553 aa).

The disordered stretch occupies residues Met-1–Lys-25. Positions Ser-11–Thr-20 are enriched in polar residues. Residues Thr-20, Arg-24, Ser-117–His-118, and Lys-131 each bind substrate. The Phosphoserine intermediate role is filled by Ser-117. Ser-117 is a Mg(2+) binding site. Residues Asp-289, Asp-291, and Asp-293 each contribute to the Mg(2+) site. Residues Asp-293–Arg-294, Thr-352, Glu-371–Ser-373, Lys-384, and Arg-509 contribute to the substrate site.

This sequence belongs to the phosphohexose mutase family. The cofactor is Mg(2+).

Its subcellular location is the cytoplasm. The catalysed reaction is alpha-D-glucose 1-phosphate = alpha-D-glucose 6-phosphate. Its function is as follows. Catalyzes the reversible conversion of glucose 1-phosphate into glucose 6-phosphate. This enzyme participates in both the breakdown and synthesis of glucose. In Entamoeba histolytica (strain ATCC 30459 / HM-1:IMSS / ABRM), this protein is Phosphoglucomutase.